Consider the following 264-residue polypeptide: tRNA pseudouridine synthase A (264 aa).

The Nucleophile role is filled by aspartate 51. A substrate-binding site is contributed by tyrosine 109.

The protein belongs to the tRNA pseudouridine synthase TruA family. Homodimer.

The catalysed reaction is uridine(38/39/40) in tRNA = pseudouridine(38/39/40) in tRNA. Its function is as follows. Formation of pseudouridine at positions 38, 39 and 40 in the anticodon stem and loop of transfer RNAs. The protein is tRNA pseudouridine synthase A of Pasteurella multocida (strain Pm70).